A 465-amino-acid polypeptide reads, in one-letter code: Argininosuccinate lyase (465 aa).

Belongs to the lyase 1 family. Argininosuccinate lyase subfamily.

The protein localises to the cytoplasm. It carries out the reaction 2-(N(omega)-L-arginino)succinate = fumarate + L-arginine. Its pathway is amino-acid biosynthesis; L-arginine biosynthesis; L-arginine from L-ornithine and carbamoyl phosphate: step 3/3. This chain is Argininosuccinate lyase, found in Methylococcus capsulatus (strain ATCC 33009 / NCIMB 11132 / Bath).